The sequence spans 351 residues: Phosphoribosylformylglycinamidine cyclo-ligase (351 aa).

It belongs to the AIR synthase family.

The protein localises to the cytoplasm. The enzyme catalyses 2-formamido-N(1)-(5-O-phospho-beta-D-ribosyl)acetamidine + ATP = 5-amino-1-(5-phospho-beta-D-ribosyl)imidazole + ADP + phosphate + H(+). The protein operates within purine metabolism; IMP biosynthesis via de novo pathway; 5-amino-1-(5-phospho-D-ribosyl)imidazole from N(2)-formyl-N(1)-(5-phospho-D-ribosyl)glycinamide: step 2/2. The protein is Phosphoribosylformylglycinamidine cyclo-ligase of Burkholderia multivorans (strain ATCC 17616 / 249).